A 285-amino-acid chain; its full sequence is Bifunctional protein FolD (285 aa).

166–168 provides a ligand contact to NADP(+); that stretch reads GAS.

It belongs to the tetrahydrofolate dehydrogenase/cyclohydrolase family. As to quaternary structure, homodimer.

It catalyses the reaction (6R)-5,10-methylene-5,6,7,8-tetrahydrofolate + NADP(+) = (6R)-5,10-methenyltetrahydrofolate + NADPH. The enzyme catalyses (6R)-5,10-methenyltetrahydrofolate + H2O = (6R)-10-formyltetrahydrofolate + H(+). Its pathway is one-carbon metabolism; tetrahydrofolate interconversion. In terms of biological role, catalyzes the oxidation of 5,10-methylenetetrahydrofolate to 5,10-methenyltetrahydrofolate and then the hydrolysis of 5,10-methenyltetrahydrofolate to 10-formyltetrahydrofolate. The polypeptide is Bifunctional protein FolD (Thioalkalivibrio sulfidiphilus (strain HL-EbGR7)).